A 1059-amino-acid polypeptide reads, in one-letter code: Carbamoyl phosphate synthase large chain (1059 aa).

A carboxyphosphate synthetic domain region spans residues 1–401; the sequence is MPKRTDIHKI…ALLKAVASLE (401 aa). ATP contacts are provided by Arg-129, Arg-169, Gly-175, Gly-176, Lys-208, Ile-210, Glu-215, Gly-241, Ile-242, His-243, Gln-284, and Glu-298. In terms of domain architecture, ATP-grasp 1 spans 133-327; the sequence is KELMQELGEP…IAKLAAKIAV (195 aa). Mg(2+) contacts are provided by Gln-284, Glu-298, and Asn-300. Mn(2+) is bound by residues Gln-284, Glu-298, and Asn-300. Residues 402-546 form an oligomerization domain region; the sequence is IDQKDLLSKE…YSTYETENES (145 aa). A carbamoyl phosphate synthetic domain region spans residues 547 to 929; sequence RRSAKPSVLV…ALYKAFAGAG (383 aa). Residues 671–861 enclose the ATP-grasp 2 domain; sequence DQVIKDLNLR…MAQLATKVIL (191 aa). ATP is bound by residues Arg-707, Ala-746, Leu-748, Glu-752, Gly-777, Val-778, His-779, Ser-780, Gln-820, and Glu-832. Gln-820, Glu-832, and Asn-834 together coordinate Mg(2+). Residues Gln-820, Glu-832, and Asn-834 each contribute to the Mn(2+) site. The MGS-like domain maps to 930–1059; that stretch reads MEVPDNGAVL…EMTSFKTTEL (130 aa). Residues 930–1059 are allosteric domain; that stretch reads MEVPDNGAVL…EMTSFKTTEL (130 aa).

The protein belongs to the CarB family. As to quaternary structure, composed of two chains; the small (or glutamine) chain promotes the hydrolysis of glutamine to ammonia, which is used by the large (or ammonia) chain to synthesize carbamoyl phosphate. Tetramer of heterodimers (alpha,beta)4. It depends on Mg(2+) as a cofactor. Mn(2+) is required as a cofactor.

The catalysed reaction is hydrogencarbonate + L-glutamine + 2 ATP + H2O = carbamoyl phosphate + L-glutamate + 2 ADP + phosphate + 2 H(+). It carries out the reaction hydrogencarbonate + NH4(+) + 2 ATP = carbamoyl phosphate + 2 ADP + phosphate + 2 H(+). Its pathway is amino-acid biosynthesis; L-arginine biosynthesis; carbamoyl phosphate from bicarbonate: step 1/1. The protein operates within pyrimidine metabolism; UMP biosynthesis via de novo pathway; (S)-dihydroorotate from bicarbonate: step 1/3. Large subunit of the glutamine-dependent carbamoyl phosphate synthetase (CPSase). CPSase catalyzes the formation of carbamoyl phosphate from the ammonia moiety of glutamine, carbonate, and phosphate donated by ATP, constituting the first step of 2 biosynthetic pathways, one leading to arginine and/or urea and the other to pyrimidine nucleotides. The large subunit (synthetase) binds the substrates ammonia (free or transferred from glutamine from the small subunit), hydrogencarbonate and ATP and carries out an ATP-coupled ligase reaction, activating hydrogencarbonate by forming carboxy phosphate which reacts with ammonia to form carbamoyl phosphate. In Limosilactobacillus fermentum (strain NBRC 3956 / LMG 18251) (Lactobacillus fermentum), this protein is Carbamoyl phosphate synthase large chain.